A 192-amino-acid chain; its full sequence is Adenylate kinase (192 aa).

10 to 18 (GVPGVGSTT) contacts ATP.

It belongs to the archaeal adenylate kinase family. Monomer.

It localises to the cytoplasm. It carries out the reaction AMP + ATP = 2 ADP. The polypeptide is Adenylate kinase (adkA) (Methanocaldococcus jannaschii (strain ATCC 43067 / DSM 2661 / JAL-1 / JCM 10045 / NBRC 100440) (Methanococcus jannaschii)).